An 86-amino-acid polypeptide reads, in one-letter code: U15-lycotoxin-Ls1d (86 aa).

Residues 1 to 20 form the signal peptide; the sequence is MNSKIFAVLLLLGLLSCVLS. The WAP domain occupies 21-66; it reads DQYCPKSSITACKKMNIRNDCCKDDDCTGGSWCCATPCGNFCKYPT. 5 disulfides stabilise this stretch: Cys24-Cys54, Cys32-Cys58, Cys41-Cys53, Cys42-Cys80, and Cys47-Cys62.

It belongs to the venom protein 11 family. 01 (wap-1) subfamily. Contains 5 disulfide bonds. In terms of tissue distribution, expressed by the venom gland.

It is found in the secreted. Has antibacterial activity. The sequence is that of U15-lycotoxin-Ls1d from Lycosa singoriensis (Wolf spider).